Here is a 110-residue protein sequence, read N- to C-terminus: UPF0060 membrane protein Ajs_2087 (110 aa).

Helical transmembrane passes span 7-27 (LALFLLTAVAEIVGCYLPWLW), 33-53 (SAWLLVPAAASLALFAWLLTL), 63-83 (AAYGGVYVAVALVWLWTVDGV), and 86-106 (GPWDWLGVAVTLCGMAIIAFA).

Belongs to the UPF0060 family.

It is found in the cell inner membrane. This Acidovorax sp. (strain JS42) protein is UPF0060 membrane protein Ajs_2087.